The following is a 367-amino-acid chain: uncharacterized protein (367 aa).

Residues 333-367 (RERRPTLNAQRAHAAAQQQPRRRNRRQQGTGASAS) are disordered. A compositionally biased stretch (low complexity) spans 341 to 351 (AQRAHAAAQQQ).

This is an uncharacterized protein from Amazona oratrix (yellow-headed parrot).